The primary structure comprises 101 residues: Anti-lipopolysaccharide factor (101 aa).

Cys-31 and Cys-52 are oxidised to a cystine.

In terms of biological role, binds tightly to LPS and thus specifically inhibits the LPS-mediated activation of the hemolymph coagulation. It has a strong antibacterial effect especially on the growth of Gram-negative bacteria. This is Anti-lipopolysaccharide factor from Limulus polyphemus (Atlantic horseshoe crab).